A 501-amino-acid polypeptide reads, in one-letter code: ATP synthase subunit alpha (501 aa).

169 to 176 (GDRQTGKT) contributes to the ATP binding site.

It belongs to the ATPase alpha/beta chains family. In terms of assembly, F-type ATPases have 2 components, CF(1) - the catalytic core - and CF(0) - the membrane proton channel. CF(1) has five subunits: alpha(3), beta(3), gamma(1), delta(1), epsilon(1). CF(0) has three main subunits: a(1), b(2) and c(9-12). The alpha and beta chains form an alternating ring which encloses part of the gamma chain. CF(1) is attached to CF(0) by a central stalk formed by the gamma and epsilon chains, while a peripheral stalk is formed by the delta and b chains.

It is found in the cell membrane. It carries out the reaction ATP + H2O + 4 H(+)(in) = ADP + phosphate + 5 H(+)(out). Functionally, produces ATP from ADP in the presence of a proton gradient across the membrane. The alpha chain is a regulatory subunit. This chain is ATP synthase subunit alpha, found in Streptococcus pneumoniae serotype 2 (strain D39 / NCTC 7466).